A 239-amino-acid chain; its full sequence is Ribonuclease PH (239 aa).

Phosphate contacts are provided by residues Arg-86 and 124 to 126 (GTR).

This sequence belongs to the RNase PH family. In terms of assembly, homohexameric ring arranged as a trimer of dimers.

It carries out the reaction tRNA(n+1) + phosphate = tRNA(n) + a ribonucleoside 5'-diphosphate. Phosphorolytic 3'-5' exoribonuclease that plays an important role in tRNA 3'-end maturation. Removes nucleotide residues following the 3'-CCA terminus of tRNAs; can also add nucleotides to the ends of RNA molecules by using nucleoside diphosphates as substrates, but this may not be physiologically important. Probably plays a role in initiation of 16S rRNA degradation (leading to ribosome degradation) during starvation. The protein is Ribonuclease PH of Azoarcus sp. (strain BH72).